A 178-amino-acid chain; its full sequence is Twist-related protein (178 aa).

A bHLH domain is found at 20–71 (QQRACANRRERQRTKELNDAFTLLRKLIPSMPSDKMSKIHTLRIATDYISFL).

As to quaternary structure, efficient DNA binding requires dimerization with another bHLH protein. Homodimer. Forms a heterodimer with hlh-2. In terms of tissue distribution, expressed in defecation-associated muscles and neuron-like cells in the head at the L1 stage. In later larvae, expressed in SM cells and their descendants. Not expressed in differentiated body wall or sex muscles.

It localises to the nucleus. In terms of biological role, acts as a transcriptional regulator. Involved in postembryonic mesodermal cell fate specification. Activates ceh-24 and egl-15 during mesodermal patterning. This Caenorhabditis elegans protein is Twist-related protein (hlh-8).